Here is a 65-residue protein sequence, read N- to C-terminus: Large ribosomal subunit protein uL29 (65 aa).

The protein belongs to the universal ribosomal protein uL29 family.

In Acidovorax ebreus (strain TPSY) (Diaphorobacter sp. (strain TPSY)), this protein is Large ribosomal subunit protein uL29.